The sequence spans 295 residues: Probable palmitoyltransferase ZDHHC24 (295 aa).

The Cytoplasmic portion of the chain corresponds to 1–20 (MTSFMSRVWCKVESTGRQLP). A helical transmembrane segment spans residues 21 to 41 (IVLNAVLVFSITAEVSYLVLV). The Extracellular portion of the chain corresponds to 42–60 (EAPFEPEQKKTDWSTIWTG). A helical transmembrane segment spans residues 61-81 (LHLFAQYFMLGNITWNASLFV). At 82–151 (KTNPSIRGVF…HNYRYFLTCL (70 aa)) the chain is on the cytoplasmic side. In terms of domain architecture, DHHC spans 102 to 152 (RYCYNCETHTPPRCSHCYDCNVCVLRRDHHCVFFGQCVGFHNYRYFLTCLL). Residue cysteine 132 is the S-palmitoyl cysteine intermediate of the active site. The helical transmembrane segment at 152–172 (LFMWAGLLYAVVMNAEVFIFI) threads the bilayer. At 173 to 176 (LKEG) the chain is on the extracellular side. A helical membrane pass occupies residues 177 to 197 (VTFHSVMLLLVPWIMLVSGQV). Topologically, residues 198-203 (TTRAFA) are cytoplasmic. Residues 204–224 (FAFIADTCVVGFLLVAAFLFF) form a helical membrane-spanning segment. The Extracellular portion of the chain corresponds to 225 to 295 (HVALMLRGQT…SLEPKKQAVH (71 aa)).

The protein belongs to the DHHC palmitoyltransferase family.

Its subcellular location is the membrane. It carries out the reaction L-cysteinyl-[protein] + hexadecanoyl-CoA = S-hexadecanoyl-L-cysteinyl-[protein] + CoA. In terms of biological role, probable palmitoyltransferase that could catalyze the addition of palmitate onto various protein substrates. This is Probable palmitoyltransferase ZDHHC24 from Danio rerio (Zebrafish).